Consider the following 189-residue polypeptide: Apolipoprotein D (189 aa).

The signal sequence occupies residues methionine 1–glycine 20. The residue at position 21 (glutamine 21) is a Pyrrolidone carboxylic acid. 2 disulfides stabilise this stretch: cysteine 28–cysteine 134 and cysteine 61–cysteine 185. 2 N-linked (GlcNAc...) asparagine glycosylation sites follow: asparagine 65 and asparagine 98.

This sequence belongs to the calycin superfamily. Lipocalin family. As to quaternary structure, homodimer.

It localises to the secreted. Its function is as follows. APOD occurs in the macromolecular complex with lecithin-transport and binding of bilin. Appears to be able to transport a variety of ligands in a number of different contexts. In Bos taurus (Bovine), this protein is Apolipoprotein D (APOD).